Reading from the N-terminus, the 188-residue chain is Phosphatidylinositol N-acetylglucosaminyltransferase subunit H (188 aa).

Belongs to the PIGH family. In terms of assembly, component of the glycosylphosphatidylinositol-N-acetylglucosaminyltransferase (GPI-GnT) complex composed at least by PIGA, PIGC, PIGH, PIGP, PIGQ, PIGY and DPM2. Interacts with PIGQ.

Its subcellular location is the cytoplasm. It participates in glycolipid biosynthesis; glycosylphosphatidylinositol-anchor biosynthesis. Functionally, part of the glycosylphosphatidylinositol-N-acetylglucosaminyltransferase (GPI-GnT) complex that catalyzes the transfer of N-acetylglucosamine from UDP-N-acetylglucosamine to phosphatidylinositol and participates in the first step of GPI biosynthesis. The sequence is that of Phosphatidylinositol N-acetylglucosaminyltransferase subunit H from Mus musculus (Mouse).